The sequence spans 299 residues: tRNA dimethylallyltransferase (299 aa).

Residue 11 to 18 (GPTAVGKT) participates in ATP binding. 13–18 (TAVGKT) provides a ligand contact to substrate. Residues 36 to 39 (DSQQ) form an interaction with substrate tRNA region.

This sequence belongs to the IPP transferase family. Monomer. The cofactor is Mg(2+).

The catalysed reaction is adenosine(37) in tRNA + dimethylallyl diphosphate = N(6)-dimethylallyladenosine(37) in tRNA + diphosphate. Catalyzes the transfer of a dimethylallyl group onto the adenine at position 37 in tRNAs that read codons beginning with uridine, leading to the formation of N6-(dimethylallyl)adenosine (i(6)A). This is tRNA dimethylallyltransferase from Streptococcus pyogenes serotype M6 (strain ATCC BAA-946 / MGAS10394).